Consider the following 90-residue polypeptide: MAKANEHFFYVLKCSDNSYYGGYTTDVMRREAEHNAGIRCKYTKTRRPVKVIHFEKFETRSEATKAEAAFKKLSRKNKDSYLSEREEESK.

The GIY-YIG domain occupies 5–80 (NEHFFYVLKC…KKLSRKNKDS (76 aa)).

Belongs to the UPF0213 family.

This chain is UPF0213 protein lin0209, found in Listeria innocua serovar 6a (strain ATCC BAA-680 / CLIP 11262).